We begin with the raw amino-acid sequence, 316 residues long: DNA-directed RNA polymerase III subunit RPC6 (316 aa).

A2 bears the N-acetylalanine mark. Glycyl lysine isopeptide (Lys-Gly) (interchain with G-Cter in SUMO2) cross-links involve residues K5 and K7. [4Fe-4S] cluster-binding residues include C287, C290, C296, and C307.

The protein belongs to the eukaryotic RPC34/RPC39 RNA polymerase subunit family. Component of the RNA polymerase III complex consisting of 17 subunits: a ten-subunit horseshoe-shaped catalytic core composed of POLR3A/RPC1, POLR3B/RPC2, POLR1C/RPAC1, POLR1D/RPAC2, POLR3K/RPC10, POLR2E/RPABC1, POLR2F/RPABC2, POLR2H/RPABC3, POLR2K/RPABC4 and POLR2L/RPABC5; a mobile stalk composed of two subunits POLR3H/RPC8 and CRCP/RPC9, protruding from the core and functioning primarily in transcription initiation; and additional subunits homologous to general transcription factors of the RNA polymerase II machinery, POLR3C/RPC3-POLR3F/RPC6-POLR3G/RPC7 heterotrimer required for transcription initiation and POLR3D/RPC4-POLR3E/RPC5 heterodimer involved in both transcription initiation and termination. Directly interacts with POLR3C. Interacts with TBP and TFIIIB90 and GTF3C4. Interacts with MAF1. As part of the RNA polymerase III complex, interacts with PKP2.

It localises to the nucleus. In terms of biological role, DNA-dependent RNA polymerase catalyzes the transcription of DNA into RNA using the four ribonucleoside triphosphates as substrates. Specific peripheric component of RNA polymerase III (Pol III) which synthesizes small non-coding RNAs including 5S rRNA, snRNAs, tRNAs and miRNAs from at least 500 distinct genomic loci. Part of POLR3C/RPC3-POLR3F/RPC6-POLR3G/RPC7 heterotrimer that coordinates the dynamics of Pol III stalk and clamp modules during the transition from apo to elongation state. Pol III plays a key role in sensing and limiting infection by intracellular bacteria and DNA viruses, including varicella zoster virus. Acts as a nuclear and cytosolic DNA sensor detecting AT-rich DNA, involved in innate immune response. Can sense non-self dsDNA that serves as template for transcription into dsRNA. The non-self RNA polymerase III transcripts, such as Epstein-Barr virus-encoded RNAs (EBERs) induce type I interferon and NF-kappa-B through the RIG-I pathway. Preferentially binds double-stranded DNA (dsDNA). The chain is DNA-directed RNA polymerase III subunit RPC6 (POLR3F) from Bos taurus (Bovine).